A 932-amino-acid chain; its full sequence is MQSVNIVSTNYSRYGVSVYDRLYRKDKNVSAKHRPSSTGVYGHDASTVDHASRSNNNLNLTRSTSAISESDDVATISTNNSRRSVIKRKYKSLITASSKKLITKLYEHGSNSDSFSIFSHKTSQSHHPAQRLGTEEDLIINDLFKRKEISDLPDEVLRNILSNVKDDQRTLVNCLYVNKAFYNATKPTLYERPKFTSTYRVAQFVTSIRTNPQNGLYVRELDLSKLKNGSLNGKSTSNTGVVADSPDVDEYNPMRTRTGSVTSFTSVTSTANSNTALSITTNNKDVALAGWRDWRYRHDPLYSSPVLNSYNAKRTVSRAPSIKSSHSSSSLTLFPGLKSKESFAQLSEGKSSDNGNNGKRQRSNSSVSSITNSLMSSLYNGSHISLNTTLSGSDNNSSKTQSKGKSSSSPGNPNDSSGEQDSIISSSSQIDTNTFGMTSSKSTSSTSNWFRMKLHGNGTRKLRLRSNKAISSKKDEQQNEESAQTAQKIETPIIKRTEPFSTPHPYTNKFLLKYAQYKDLPLGYILHILDHCPYLYILDLSNLTLCTDFEIIEGRRYKGRKQRFGSSRALPVVQESVISTDVPNDLDVIYLTDSSKTYEYYDRLRNTNKHKRSSSSNNLWSIPNQGWSDAPAPIGSHKNDLRRTHSQTIGRSNVELRKLNASEIFEHIATNQKSAYNTHLRVYMKNVLWCTQDMVKSFVLENFDQQAENLGEDKSSEMFIHDMNFSFENSGLNRNFVWTCEGNLQEFIAMVVLDEVNRKDDLEIENLFNIKAERILTPTNGPERAPEVHYISNVFTVSYGFQSNKKREMKFRVTILKTDTPMYFSIKKLADDYTSVVIKLQTNKNVALHGSETADIITTDQGSVLPEDVPEDNNADDTNNGENTIAQPFSNDPKERIERITQEIVARLKDLRGSDLRRNIGENNYVRERFLL.

The disordered stretch occupies residues 29 to 63 (VSAKHRPSSTGVYGHDASTVDHASRSNNNLNLTRS). A compositionally biased stretch (low complexity) spans 53–63 (RSNNNLNLTRS). The F-box domain occupies 146–193 (RKEISDLPDEVLRNILSNVKDDQRTLVNCLYVNKAFYNATKPTLYERP). The span at 346-358 (LSEGKSSDNGNNG) shows a compositional bias: polar residues. Disordered regions lie at residues 346 to 369 (LSEGKSSDNGNNGKRQRSNSSVSS), 389 to 450 (TLSG…SNWF), 470 to 500 (ISSKKDEQQNEESAQTAQKIETPIIKRTEPF), and 863 to 893 (SVLPEDVPEDNNADDTNNGENTIAQPFSNDP). 2 stretches are compositionally biased toward low complexity: residues 395–431 (NNSSKTQSKGKSSSSPGNPNDSSGEQDSIISSSSQID) and 438–447 (TSSKSTSSTS). Polar residues predominate over residues 876–890 (DDTNNGENTIAQPFS).

Its function is as follows. F-box protein probably involved in ubiquitin conjugation pathway. The protein is F-box protein COS111 (COS111) of Candida glabrata (strain ATCC 2001 / BCRC 20586 / JCM 3761 / NBRC 0622 / NRRL Y-65 / CBS 138) (Yeast).